Here is a 427-residue protein sequence, read N- to C-terminus: Dihydroorotase (427 aa).

Residues His-57 and His-59 each coordinate Zn(2+). Substrate-binding positions include 59 to 61 and Asn-91; that span reads HLR. Residues Asp-149, His-176, and His-229 each contribute to the Zn(2+) site. Asn-275 provides a ligand contact to substrate. Asp-302 is a binding site for Zn(2+). Residue Asp-302 is part of the active site. Substrate-binding positions include His-306 and 320 to 321; that span reads FG.

The protein belongs to the metallo-dependent hydrolases superfamily. DHOase family. Class I DHOase subfamily. Requires Zn(2+) as cofactor.

The catalysed reaction is (S)-dihydroorotate + H2O = N-carbamoyl-L-aspartate + H(+). It participates in pyrimidine metabolism; UMP biosynthesis via de novo pathway; (S)-dihydroorotate from bicarbonate: step 3/3. Catalyzes the reversible cyclization of carbamoyl aspartate to dihydroorotate. The sequence is that of Dihydroorotase from Shouchella clausii (strain KSM-K16) (Alkalihalobacillus clausii).